The primary structure comprises 395 residues: Non-homologous end joining protein Ku (395 aa).

The region spanning 9–181 (ISFGLVSIPI…PPEDAAPDGD (173 aa)) is the Ku domain. The interval 252-395 (RAARTSRDDE…SASSRKRTSA (144 aa)) is disordered. Polar residues-rich tracts occupy residues 283–292 (SSKTSGQSSG) and 311–320 (GKTVTRSGDS). Positions 351–361 (TARKTTAKKTT) are enriched in basic residues. Low complexity predominate over residues 362 to 371 (AKGTTGTTAA).

It belongs to the prokaryotic Ku family. Homodimer. Interacts with LigD.

In terms of biological role, with LigD forms a non-homologous end joining (NHEJ) DNA repair enzyme, which repairs dsDNA breaks with reduced fidelity. Binds linear dsDNA with 5'- and 3'- overhangs but not closed circular dsDNA nor ssDNA. Recruits and stimulates the ligase activity of LigD. This Streptomyces griseus subsp. griseus (strain JCM 4626 / CBS 651.72 / NBRC 13350 / KCC S-0626 / ISP 5235) protein is Non-homologous end joining protein Ku.